Consider the following 617-residue polypeptide: Vacuolar protein sorting-associated protein 33B (617 aa).

It belongs to the STXBP/unc-18/SEC1 family. In terms of assembly, probable core component of the class C core vacuole/endosome tethering (CORVET) complex. The common core is composed of the class C Vps proteins vps-11, vps-16 and vps-18, and which further associates with vps-8 and vps-33.2. Interacts with spe-39. In terms of tissue distribution, broadly expressed in somatic tissues including the pharynx, intestine, spermatheca, and in coelomocytes. Expressed in the lining of the gut lumen.

The protein resides in the early endosome. It is found in the late endosome membrane. It localises to the lysosome membrane. Its subcellular location is the cytoplasmic vesicle. The protein localises to the clathrin-coated vesicle. The protein resides in the recycling endosome. Plays a role in vesicle-mediated protein trafficking to lysosomal compartments and in membrane docking/fusion reactions of late endosomes/lysosomes. Believed to act as a component of the putative CORVET endosomal tethering complex which is proposed to be involved in the rab-5-to-rab-7 endosome conversion probably implicating sand-1, and via binding SNAREs and SNARE complexes to mediate tethering and docking events during SNARE-mediated membrane fusion. The CORVET complex is proposed to function as a rab-5 effector to mediate early endosome fusion probably in specific endosome subpopulations. Most likely within the CORVET complex, it is involved in the fusion of endocytic compartments. Required for sperm development and function. In Caenorhabditis elegans, this protein is Vacuolar protein sorting-associated protein 33B.